A 282-amino-acid chain; its full sequence is Acyl-CoA-binding domain-containing protein 6 (282 aa).

The tract at residues 1–31 (MASSFLPAGAITGDSGGELSSGDDSGEVEFP) is disordered. The ACB domain occupies 42-127 (LAELFEKAAA…VKKLDPGWNP (86 aa)). An acyl-CoA contacts are provided by residues 69–73 (YARYK) and lysine 95. Position 106 is a phosphoserine (serine 106). An an acyl-CoA-binding site is contributed by tyrosine 114. ANK repeat units lie at residues 191-220 (EGRA…DINC) and 224-253 (EGQT…DPTL).

As to quaternary structure, monomer. In terms of tissue distribution, detected in placenta and spleen (at protein level). Detected in placenta, umbilical cord blood, CD34-positive hematopoietic progenitor cells and bone marrow.

Its subcellular location is the cytoplasm. The protein localises to the nucleus. Functionally, binds long-chain acyl-coenzyme A molecules with a strong preference for unsaturated C18:1-CoA, lower affinity for unsaturated C20:4-CoA, and very weak affinity for saturated C16:0-CoA. Does not bind fatty acids. Plays a role in protein N-myristoylation. The chain is Acyl-CoA-binding domain-containing protein 6 (ACBD6) from Homo sapiens (Human).